The chain runs to 343 residues: Heat-inducible transcription repressor HrcA (343 aa).

It belongs to the HrcA family.

Negative regulator of class I heat shock genes (grpE-dnaK-dnaJ and groELS operons). Prevents heat-shock induction of these operons. The protein is Heat-inducible transcription repressor HrcA of Mycolicibacterium vanbaalenii (strain DSM 7251 / JCM 13017 / BCRC 16820 / KCTC 9966 / NRRL B-24157 / PYR-1) (Mycobacterium vanbaalenii).